Here is a 1139-residue protein sequence, read N- to C-terminus: Solute carrier family 12 member 5 (1139 aa).

Disordered regions lie at residues Met1–Glu62 and Pro95–Gln116. Residues Met1–Ser98 lie on the Cytoplasmic side of the membrane. Basic and acidic residues predominate over residues Pro21–Pro45. Positions Lys46–Thr55 are enriched in polar residues. A Phosphothreonine modification is found at Thr57. The span at Ser98–Lys111 shows a compositional bias: basic and acidic residues. The discontinuously helical transmembrane segment at Lys99–Met120 threads the bilayer. K(+) is bound at residue Lys113. The Extracellular portion of the chain corresponds to Gly121–Pro129. A helical transmembrane segment spans residues Cys130–Gly151. Topologically, residues Ile152–Ser174 are cytoplasmic. A helical transmembrane segment spans residues Ala175 to Val203. Ala184 contributes to the chloride binding site. The Extracellular segment spans residues Gly204 to Tyr229. 2 consecutive transmembrane segments (helical) span residues Leu230–Leu250 and Asn251–Asn276. At Lys277–Leu402 the chain is on the extracellular side. Cys310 and Cys325 form a disulfide bridge. Residues Asn314, Asn333, Asn351, and Asn362 are each glycosylated (N-linked (GlcNAc...) asparagine). The cysteines at positions 345 and 354 are disulfide-linked. A helical membrane pass occupies residues Ala403 to Thr420. Met410 contacts K(+). Tyr414 and Val415 together coordinate chloride. At Ser421 to Ile429 the chain is on the cytoplasmic side. A helical transmembrane segment spans residues Tyr430–Ser453. K(+) is bound at residue Asp446. At Ile454–Leu485 the chain is on the extracellular side. The helical transmembrane segment at Arg486–Gly513 threads the bilayer. Residues Ser514 to Gln534 lie on the Cytoplasmic side of the membrane. The next 2 membrane-spanning stretches (helical) occupy residues Ala535 to Gly555 and Glu556 to Asp578. Glu569 is a binding site for chloride. Over Glu579–Tyr592 the chain is Cytoplasmic. The next 2 membrane-spanning stretches (helical) occupy residues Met593 to Arg615 and Tyr616 to Leu632. Residues Met633–Ser1139 lie on the Cytoplasmic side of the membrane. The tract at residues Gly667 to Leu681 is scissor helix. Thr929 is subject to Phosphothreonine; by OXSR1 and STK39. The segment at His943–Glu1025 is disordered. The segment covering Thr945 to Gly962 has biased composition (basic and acidic residues). Residues Thr982–Val994 show a composition bias toward acidic residues. Over residues Pro1003–Pro1012 the composition is skewed to low complexity. Thr1030 is modified (phosphothreonine; by OXSR1 and STK39). The interval Lys1033–Ile1052 is disordered. 3 positions are modified to phosphoserine: Ser1045, Ser1048, and Ser1049.

Belongs to the SLC12A transporter family. K/Cl co-transporter subfamily. In terms of assembly, homodimer; adopts a domain-swap conformation at the scissor helices connecting the transmembrane domain and C-terminal domain. Heterodimer wHeterodimer with K-Cl cotransporters SLC12A6 and SLC12A7. Interacts with AP2A1. In terms of processing, phosphorylated at Thr-929 and Thr-1030 by OXSR1/OSR1 and STK39/SPAK downstream of WNK kinases (WNK1, WNK2, WNK3 or WNK4), inhibiting the potassium-chloride cotransport activity. Highly expressed in brain. Not detected in other tissues. Highly expressed in pyramidal neurons and in neurons throughout the cortex, hippocampus, the granular layer of the cerebellum and in groups of neurons throughout the brainstem. Barely detectable in dorsal-root ganglions.

Its subcellular location is the cell membrane. The protein localises to the cell projection. The protein resides in the dendrite. It catalyses the reaction K(+)(in) + chloride(in) = K(+)(out) + chloride(out). Inhibited following phosphorylation by OXSR1/OSR1 and STK39/SPAK: phosphorylation takes place downstream of WNK kinases (WNK1, WNK2, WNK3 or WNK4) in response to hyperosmotic stress and subsequent cell shrinkage. Its function is as follows. Mediates electroneutral potassium-chloride cotransport in mature neurons and is required for neuronal Cl(-) homeostasis. As major extruder of intracellular chloride, it establishes the low neuronal Cl(-) levels required for chloride influx after binding of GABA-A and glycine to their receptors, with subsequent hyperpolarization and neuronal inhibition. Involved in the regulation of dendritic spine formation and maturation. The protein is Solute carrier family 12 member 5 (Slc12a5) of Rattus norvegicus (Rat).